The chain runs to 185 residues: Peptidyl-tRNA hydrolase (185 aa).

Tyr14 contributes to the tRNA binding site. The Proton acceptor role is filled by His19. Phe64, Asn66, and Asn112 together coordinate tRNA.

The protein belongs to the PTH family. As to quaternary structure, monomer.

It is found in the cytoplasm. The catalysed reaction is an N-acyl-L-alpha-aminoacyl-tRNA + H2O = an N-acyl-L-amino acid + a tRNA + H(+). Hydrolyzes ribosome-free peptidyl-tRNAs (with 1 or more amino acids incorporated), which drop off the ribosome during protein synthesis, or as a result of ribosome stalling. In terms of biological role, catalyzes the release of premature peptidyl moieties from peptidyl-tRNA molecules trapped in stalled 50S ribosomal subunits, and thus maintains levels of free tRNAs and 50S ribosomes. This Lacticaseibacillus casei (strain BL23) (Lactobacillus casei) protein is Peptidyl-tRNA hydrolase.